Here is a 217-residue protein sequence, read N- to C-terminus: Mucosal pentraxin (217 aa).

A signal peptide spans 1-19 (MEKLLLGVLLLAFLPEGMT). Positions 24 to 217 (RGKVFIFPEQ…KGYVVVKPKL (194 aa)) constitute a Pentraxin (PTX) domain. C55 and C114 form a disulfide bridge. D77, N78, E155, Q156, D157, and Q167 together coordinate Ca(2+).

Belongs to the pentraxin family. As to quaternary structure, homopentamer. Pentraxin (or pentaxin) have a discoid arrangement of 5 non-covalently bound subunits. Requires Ca(2+) as cofactor.

The protein resides in the secreted. The sequence is that of Mucosal pentraxin (MPTX) from Bos taurus (Bovine).